The chain runs to 20 residues: Octopamine receptor (20 aa).

It belongs to the G-protein coupled receptor 1 family.

The protein localises to the cell membrane. In terms of biological role, putative receptor for octopamine. Octopamine (OA) is a neurotransmitter, neurohormone, and neuromodulator in invertebrates. The activity of this receptor is mediated by G proteins which activate adenylyl cyclase. The chain is Octopamine receptor from Photinus pyralis (Common eastern firefly).